The following is a 291-amino-acid chain: Cytochrome c-552 (291 aa).

The N-terminal stretch at 1–23 (MKKTLMASAVGAVIAFGTHGAMA) is a signal peptide. Residues Cys-68, Cys-71, His-72, Cys-157, Cys-161, and His-162 each coordinate heme c.

In terms of processing, binds 2 heme c groups per subunit.

It localises to the periplasm. In terms of biological role, may play a role in nitrite reduction. Shows peroxidase activity on proteolytic modification. The polypeptide is Cytochrome c-552 (nirB) (Stutzerimonas stutzeri (Pseudomonas stutzeri)).